We begin with the raw amino-acid sequence, 139 residues long: MLRTMLKSKIHRATVTCADLHYVGSVTIDADLMDAADLLEGEQVTIVDIDNGARLVTYAITGERGSGVIGINGAAAHLVHPGDLVILIAYATMDDARARTYQPRIVFVDAYNKPIDMGHDPAFVPENAGELLDPRLGVG.

The Schiff-base intermediate with substrate; via pyruvic acid role is filled by serine 25. Serine 25 bears the Pyruvic acid (Ser) mark. Residue threonine 57 participates in substrate binding. Tyrosine 58 functions as the Proton donor in the catalytic mechanism. A substrate-binding site is contributed by 73–75 (GAA).

Belongs to the PanD family. In terms of assembly, heterooctamer of four alpha and four beta subunits. It depends on pyruvate as a cofactor. Is synthesized initially as an inactive proenzyme, which is activated by self-cleavage at a specific serine bond to produce a beta-subunit with a hydroxyl group at its C-terminus and an alpha-subunit with a pyruvoyl group at its N-terminus.

The protein localises to the cytoplasm. It catalyses the reaction L-aspartate + H(+) = beta-alanine + CO2. Its pathway is cofactor biosynthesis; (R)-pantothenate biosynthesis; beta-alanine from L-aspartate: step 1/1. Functionally, catalyzes the pyruvoyl-dependent decarboxylation of aspartate to produce beta-alanine. The polypeptide is Aspartate 1-decarboxylase (Mycobacterium bovis (strain BCG / Tokyo 172 / ATCC 35737 / TMC 1019)).